A 446-amino-acid chain; its full sequence is Probable glycine dehydrogenase (decarboxylating) subunit 1 (446 aa).

The protein belongs to the GcvP family. N-terminal subunit subfamily. The glycine cleavage system is composed of four proteins: P, T, L and H. In this organism, the P 'protein' is a heterodimer of two subunits.

The catalysed reaction is N(6)-[(R)-lipoyl]-L-lysyl-[glycine-cleavage complex H protein] + glycine + H(+) = N(6)-[(R)-S(8)-aminomethyldihydrolipoyl]-L-lysyl-[glycine-cleavage complex H protein] + CO2. Functionally, the glycine cleavage system catalyzes the degradation of glycine. The P protein binds the alpha-amino group of glycine through its pyridoxal phosphate cofactor; CO(2) is released and the remaining methylamine moiety is then transferred to the lipoamide cofactor of the H protein. The polypeptide is Probable glycine dehydrogenase (decarboxylating) subunit 1 (Xanthobacter autotrophicus (strain ATCC BAA-1158 / Py2)).